Here is an 803-residue protein sequence, read N- to C-terminus: Leucine--tRNA ligase (803 aa).

Positions 40–51 match the 'HIGH' region motif; that stretch reads PYPSGAGLHVGH. The 'KMSKS' region signature appears at 575–579; that stretch reads KMSKS. K578 lines the ATP pocket.

Belongs to the class-I aminoacyl-tRNA synthetase family.

The protein localises to the cytoplasm. The enzyme catalyses tRNA(Leu) + L-leucine + ATP = L-leucyl-tRNA(Leu) + AMP + diphosphate. The chain is Leucine--tRNA ligase from Listeria monocytogenes serotype 4a (strain HCC23).